The primary structure comprises 89 residues: HssA/B-like protein 10 (89 aa).

It belongs to the hssA/B family.

The protein is HssA/B-like protein 10 (hssl10) of Dictyostelium discoideum (Social amoeba).